The chain runs to 385 residues: T-box transcription factor TBX10 (385 aa).

The T-box DNA-binding region spans 69-252 (LEMKPLWEEF…SNPFAKGFRE (184 aa)). Disordered regions lie at residues 283-310 (GSAE…NQLL) and 328-359 (QNLY…AGDQ). Polar residues predominate over residues 293-307 (KASASSSRTPTQPHN). The segment covering 331-347 (YPGSPSRAGPPRARLAP) has biased composition (low complexity).

Its subcellular location is the nucleus. In terms of biological role, probable transcriptional regulator involved in developmental processes. The sequence is that of T-box transcription factor TBX10 (Tbx10) from Mus musculus (Mouse).